Consider the following 91-residue polypeptide: N(2)-fixation sustaining protein CowN (91 aa).

It belongs to the CowN family.

Is required to sustain N(2)-dependent growth in the presence of low levels of carbon monoxide (CO). Probably acts by protecting the N(2) fixation ability of the nitrogenase complex, which is inactivated in the presence of CO. In Gluconacetobacter diazotrophicus (strain ATCC 49037 / DSM 5601 / CCUG 37298 / CIP 103539 / LMG 7603 / PAl5), this protein is N(2)-fixation sustaining protein CowN.